A 592-amino-acid polypeptide reads, in one-letter code: Peroxisomal targeting signal receptor (592 aa).

C10 participates in a covalent cross-link: Glycyl cysteine thioester (Cys-Gly) (interchain with G-Cter in ubiquitin). The interval 11 to 33 (SVNGNAVAQFNKHTQQDRSLQQQ) is amphipathic helix 1 (AH1). Residue K22 forms a Glycyl lysine isopeptide (Lys-Gly) (interchain with G-Cter in ubiquitin) linkage. Polar residues predominate over residues 22 to 46 (KHTQQDRSLQQQVANQHGNVAQNQG). The disordered stretch occupies residues 22–49 (KHTQQDRSLQQQVANQHGNVAQNQGFKK). The segment at 58-76 (RANLDQFMNNGAPQNSFQF) is amphipathic helix 2 (AH2). 3 short sequence motifs (wxxxF/Y motif) span residues 100–104 (WSQDF), 128–132 (WASEF), and 185–189 (WENQF). The interval 223 to 239 (FQEVWDSLNSESFENDF) is amphipathic helix 4 (AH4). The WxxxF/Y motif 4 signature appears at 262–266 (WEKDF). TPR repeat units follow at residues 295-329 (DQDP…DENH), 330-363 (VDAW…HPEN), 440-473 (ADVQ…RPDD), 475-507 (ILWN…KPTF), and 509-541 (RARY…HQVE).

This sequence belongs to the peroxisomal targeting signal receptor family. In terms of assembly, interacts (via WxxxF/Y and LVxEF motifs) with PEX14; promoting translocation through the PEX13-PEX14 docking complex. Monoubiquitinated at Cys-10 by PEX2 during PEX5 passage through the retrotranslocation channel: monoubiquitination acts as a signal for PEX5 extraction and is required for proper export from peroxisomes and recycling. When PEX5 recycling is compromised, polyubiquitinated at Lys-22 by PEX10 during its passage through the retrotranslocation channel, leading to its degradation.

It localises to the cytoplasm. It is found in the cytosol. Its subcellular location is the peroxisome matrix. In terms of biological role, receptor that mediates peroxisomal import of proteins containing a C-terminal PTS1-type tripeptide peroxisomal targeting signal (SKL-type). Binds to cargo proteins containing a PTS1 peroxisomal targeting signal in the cytosol, and translocates them into the peroxisome matrix by passing through the PEX13-PEX14 docking complex along with cargo proteins. PEX5 receptor is then retrotranslocated into the cytosol, leading to release of bound cargo in the peroxisome matrix, and reset for a subsequent peroxisome import cycle. This chain is Peroxisomal targeting signal receptor (PEX5), found in Candida albicans (strain SC5314 / ATCC MYA-2876) (Yeast).